The chain runs to 121 residues: MARIAGVNIPNHQHTEIGLTAIFGIGRTRSRSICVAAGVDFSKKVKDLTDADLEKLREEVGKFVVEGDLRREVTMNIKRLMDLGCYRGVRHRKGLPMRGQRTRTNARTRKGPRRAAQALKK.

The tract at residues 92–121 (RKGLPMRGQRTRTNARTRKGPRRAAQALKK) is disordered.

It belongs to the universal ribosomal protein uS13 family. Part of the 30S ribosomal subunit. Forms a loose heterodimer with protein S19. Forms two bridges to the 50S subunit in the 70S ribosome.

In terms of biological role, located at the top of the head of the 30S subunit, it contacts several helices of the 16S rRNA. In the 70S ribosome it contacts the 23S rRNA (bridge B1a) and protein L5 of the 50S subunit (bridge B1b), connecting the 2 subunits; these bridges are implicated in subunit movement. Contacts the tRNAs in the A and P-sites. The sequence is that of Small ribosomal subunit protein uS13 from Burkholderia cenocepacia (strain ATCC BAA-245 / DSM 16553 / LMG 16656 / NCTC 13227 / J2315 / CF5610) (Burkholderia cepacia (strain J2315)).